A 552-amino-acid chain; its full sequence is MPSSRIPALCLGAWLLLLLLPRFARAEGAVPIPVTCFTRGLDIRKEKADVLCPGGCSLEEFSVFGNIVYASVSSICGAAVHRGVIGTSGGPVRVYSLPGRENYSSVDANGIQSQMLSRWSASFAVTKGKSSTQEATGRAVSTAHPPSGKRLKKTPEKKTGNKDCKADIAFLIDGSFNIGQRRFNLQKNFVGKVALMLGIGTEGPHVGLVQASEHPKIEFYLKNFTSAKDVLFAIKEVGFRGGNSNTGKALKHTAQKFFTADTGVRKGIPKVVVVFIDGWPSDDIEEAGIVAREFGVNVFIVSVAKPIPEELGMVQDVAFVDKAVCRNNGFFSYHMPNWFGTTKYVKPLVQKLCTHEQMMCSKTCYNSVNIAFLIDGSSSVGDSNFRLMLEFVSNIAKTFEISDIGAKIAAVQFTYDQRTEFSFTDYNTKENVLAVLANIRYMSGGTATGDAIAFTVRNVFGPIRDSPNKNFLVIVTDGQSYDDVRGPAAAAHDAGITIFSVGVAWAPLDDLRDMASKPKESHAFFTREFTGLEPIVSDVIRGICRDFLESQQ.

Positions 1–26 are cleaved as a signal peptide; sequence MPSSRIPALCLGAWLLLLLLPRFARA. In terms of domain architecture, LCCL spans 30-123; it reads VPIPVTCFTR…QMLSRWSASF (94 aa). 2 cysteine pairs are disulfide-bonded: cysteine 36–cysteine 52 and cysteine 56–cysteine 76. A glycan (N-linked (GlcNAc...) asparagine) is linked at asparagine 102. The tract at residues 129 to 161 is disordered; sequence KSSTQEATGRAVSTAHPPSGKRLKKTPEKKTGN. 2 VWFA domains span residues 167 to 352 and 369 to 539; these read DIAF…VQKL and NIAF…VSDV. A glycan (N-linked (GlcNAc...) asparagine) is linked at asparagine 223.

In terms of assembly, monomer. May form homodimer. Interacts with type II collagen. Interacts with SLC44A2. Interacts with ANXA2. In terms of processing, N-glycosylated. Expressed in inner ear structures.

It is found in the secreted. The protein resides in the extracellular space. Plays a role in the control of cell shape and motility in the trabecular meshwork. The chain is Cochlin (Coch) from Mus musculus (Mouse).